Reading from the N-terminus, the 104-residue chain is Circadian clock oscillator protein KaiB (104 aa).

This sequence belongs to the KaiB family. In terms of assembly, the KaiABC complex composition changes during the circadian cycle to control KaiC phosphorylation. Complexes KaiC(6), KaiA(2-4):KaiC(6), KaiB(6):KaiC(6) and KaiC(6):KaiB(6):KaiA(12) are among the most important forms, many form cooperatively. Undergoes a major conformational rearrangment; in the free state forms homotetramers as a dimer of dimers. When bound to the CI domain of KaiC switches to a monomeric thioredoxin-fold (KaiB(fs)). KaiB(fs) binds CikA, leading it to dephosphorylate phospho-RpaA.

In terms of biological role, key component of the KaiABC oscillator complex, which constitutes the main circadian regulator in cyanobacteria. Complex composition changes during the circadian cycle to control KaiC phosphorylation. KaiA stimulates KaiC autophosphorylation, while KaiB sequesters KaiA, leading to KaiC autodephosphorylation. Phospho-Ser-431 KaiC accumulation triggers binding of KaiB to form the KaiB(6):KaiC(6) complex, leading to changes in output regulators CikA and SasA. KaiB switches to a thioredoxin-like fold (KaiB(fs)) when bound to KaiC. KaiB(6):KaiC(6) formation exposes a site for KaiA binding that sequesters KaiA from KaiC, making the KaiC(6):KaiB(6):KaiA(12) complex that results in KaiC autodephosphorylation. A metamorphic protein which reversibly switches between an inactive tetrameric fold and a rare, thioredoxin-like monomeric fold (KaiB(fs)). KaiB(fs) binds phospho-KaiC, KaiA and CikA. KaiA and CikA compete for binding to KaiB(fs), and KaiB(fs) and SasA compete for binding to KaiC, thus the clock oscillator and output signal pathway are tightly coupled. This is Circadian clock oscillator protein KaiB from Parasynechococcus marenigrum (strain WH8102).